A 450-amino-acid chain; its full sequence is 23S rRNA (uracil(1939)-C(5))-methyltransferase RlmD (450 aa).

One can recognise a TRAM domain in the interval 12–70 (SKQLSAKLSLNVDQLDHLGAGIAQYQGKVVFIPGALPDETVTVQLTEQKKNYARAKLIK). Cys83, Cys89, Cys92, and Cys171 together coordinate [4Fe-4S] cluster. Residues Gln283, Phe312, Asn317, Glu333, Asp360, and Asp380 each contribute to the S-adenosyl-L-methionine site. Cys406 (nucleophile) is an active-site residue.

This sequence belongs to the class I-like SAM-binding methyltransferase superfamily. RNA M5U methyltransferase family. RlmD subfamily.

The enzyme catalyses uridine(1939) in 23S rRNA + S-adenosyl-L-methionine = 5-methyluridine(1939) in 23S rRNA + S-adenosyl-L-homocysteine + H(+). Catalyzes the formation of 5-methyl-uridine at position 1939 (m5U1939) in 23S rRNA. This Shewanella sp. (strain W3-18-1) protein is 23S rRNA (uracil(1939)-C(5))-methyltransferase RlmD.